The primary structure comprises 217 residues: tRNA (guanine-N(7)-)-methyltransferase (217 aa).

S-adenosyl-L-methionine-binding residues include Glu44, Glu69, Asp96, and Asp118. Asp118 is a catalytic residue. Substrate-binding positions include Lys122, Asp154, and 191-194; that span reads TEYE.

This sequence belongs to the class I-like SAM-binding methyltransferase superfamily. TrmB family.

The catalysed reaction is guanosine(46) in tRNA + S-adenosyl-L-methionine = N(7)-methylguanosine(46) in tRNA + S-adenosyl-L-homocysteine. Its pathway is tRNA modification; N(7)-methylguanine-tRNA biosynthesis. Catalyzes the formation of N(7)-methylguanine at position 46 (m7G46) in tRNA. The polypeptide is tRNA (guanine-N(7)-)-methyltransferase (Bacillus anthracis (strain CDC 684 / NRRL 3495)).